The chain runs to 204 residues: Tumor protein D53 (204 aa).

The disordered stretch occupies residues 1-31 (MEAQAQGLLETEPLQGRDGDAVGSADFSSML). A coiled-coil region spans residues 22–73 (VGSADFSSMLSEEEKEELKAELIQLEDEITTLRQVLSAKERHLVEIKQKLGM). Residues Ser29, Ser86, Ser122, and Ser131 each carry the phosphoserine modification. Arg133 carries the post-translational modification Omega-N-methylarginine. Residue Thr146 is modified to Phosphothreonine. Ser149 and Ser174 each carry phosphoserine. The segment at 164 to 204 (KVGGTNHGGGSFEEVLNSTAHASSQNASAGSRQTKDEELQC) is disordered. Polar residues predominate over residues 179-195 (LNSTAHASSQNASAGSR).

It belongs to the TPD52 family. In terms of assembly, forms a homodimer or heterodimer with other members of the family.

The chain is Tumor protein D53 (Tpd52l1) from Mus musculus (Mouse).